A 314-amino-acid polypeptide reads, in one-letter code: 2,3-dihydroxyphenylpropionate/2,3-dihydroxicinnamic acid 1,2-dioxygenase 2 (314 aa).

Residue His-115 is the Proton donor of the active site. His-179 functions as the Proton acceptor in the catalytic mechanism.

This sequence belongs to the LigB/MhpB extradiol dioxygenase family. As to quaternary structure, homotetramer. It depends on Fe(2+) as a cofactor.

It catalyses the reaction 3-(2,3-dihydroxyphenyl)propanoate + O2 = (2Z,4E)-2-hydroxy-6-oxonona-2,4-dienedioate + H(+). The enzyme catalyses (2E)-3-(2,3-dihydroxyphenyl)prop-2-enoate + O2 = (2Z,4E,7E)-2-hydroxy-6-oxonona-2,4,7-trienedioate + H(+). Its pathway is aromatic compound metabolism; 3-phenylpropanoate degradation. Catalyzes the non-heme iron(II)-dependent oxidative cleavage of 2,3-dihydroxyphenylpropionic acid and 2,3-dihydroxicinnamic acid into 2-hydroxy-6-ketononadienedioate and 2-hydroxy-6-ketononatrienedioate, respectively. This is 2,3-dihydroxyphenylpropionate/2,3-dihydroxicinnamic acid 1,2-dioxygenase 2 (mhpB2) from Pseudomonas putida (Arthrobacter siderocapsulatus).